A 420-amino-acid chain; its full sequence is UDP-N-acetylglucosamine 1-carboxyvinyltransferase (420 aa).

Lys22–Asn23 is a binding site for phosphoenolpyruvate. Residue Arg92 participates in UDP-N-acetyl-alpha-D-glucosamine binding. The active-site Proton donor is Cys116. 2-(S-cysteinyl)pyruvic acid O-phosphothioketal is present on Cys116. UDP-N-acetyl-alpha-D-glucosamine-binding positions include Arg121 to Gln125, Asp304, and Ile326.

It belongs to the EPSP synthase family. MurA subfamily.

The protein resides in the cytoplasm. The catalysed reaction is phosphoenolpyruvate + UDP-N-acetyl-alpha-D-glucosamine = UDP-N-acetyl-3-O-(1-carboxyvinyl)-alpha-D-glucosamine + phosphate. Its pathway is cell wall biogenesis; peptidoglycan biosynthesis. Its function is as follows. Cell wall formation. Adds enolpyruvyl to UDP-N-acetylglucosamine. This chain is UDP-N-acetylglucosamine 1-carboxyvinyltransferase, found in Paraburkholderia phymatum (strain DSM 17167 / CIP 108236 / LMG 21445 / STM815) (Burkholderia phymatum).